The chain runs to 350 residues: MRPIKLMGHERSLTQVKYNREGDLLFSVAKDNAASIWYSSNGERLGTLEGHQGVIWSIDVDPETLLCATGGGDLAVKLWTVENGQCVYTWNSPSPVRRVSFSPDGKKLLVIADQVMGHIGTISVYDINRDTASLTNQAETASLVIETEQNGSKATVAGWSEDGRFIIAGHDNGYVSKYDAHTGELLKSLQAHGIHNEEKNVSVTDIQFAPEDRSYFITSSKDKCAVLTDVDTFEILKVYKADAPMNTAAITPLKDFVILGGGQEARNVTTTAESQGKFEARFYHKIFEEEIGRVKGHFGPLNTVAVHPDGTGYSSGGEDGFIRVHTFDKSYKDFLFDAERTEKAAAAGLD.

6 WD repeats span residues 8 to 49 (GHER…GTLE), 51 to 89 (HQGVIWSIDVDPETLLCATGGGDLAVKLWTVENGQCVYT), 91 to 135 (NSPS…ASLT), 149 to 190 (QNGS…KSLQ), 198 to 240 (EKNV…KVYK), and 296 to 335 (GHFGPLNTVAVHPDGTGYSSGGEDGFIRVHTFDKSYKDFL).

Belongs to the eIF-3 subunit I family. Component of the eukaryotic translation initiation factor 3 (eIF-3) complex.

The protein resides in the cytoplasm. Its function is as follows. Component of the eukaryotic translation initiation factor 3 (eIF-3) complex, which is involved in protein synthesis of a specialized repertoire of mRNAs and, together with other initiation factors, stimulates binding of mRNA and methionyl-tRNAi to the 40S ribosome. The eIF-3 complex specifically targets and initiates translation of a subset of mRNAs involved in cell proliferation. This Lodderomyces elongisporus (strain ATCC 11503 / CBS 2605 / JCM 1781 / NBRC 1676 / NRRL YB-4239) (Yeast) protein is Eukaryotic translation initiation factor 3 subunit I.